Reading from the N-terminus, the 322-residue chain is TATA box-binding protein-like 2 (322 aa).

The segment at 31–54 (PALSSTQDSTYLSGRAGPSRESGA) is disordered. The segment covering 32–42 (ALSSTQDSTYL) has biased composition (polar residues).

This sequence belongs to the TBP family.

It localises to the nucleus. In terms of biological role, TATA box-binding transcription factor. Members of the TBP family are differentially required to regulate transcription and development during early embryogenesis. This is TATA box-binding protein-like 2 from Takifugu rubripes (Japanese pufferfish).